The following is a 297-amino-acid chain: Phosphoribosylaminoimidazole-succinocarboxamide synthase (297 aa).

Belongs to the SAICAR synthetase family.

The enzyme catalyses 5-amino-1-(5-phospho-D-ribosyl)imidazole-4-carboxylate + L-aspartate + ATP = (2S)-2-[5-amino-1-(5-phospho-beta-D-ribosyl)imidazole-4-carboxamido]succinate + ADP + phosphate + 2 H(+). It functions in the pathway purine metabolism; IMP biosynthesis via de novo pathway; 5-amino-1-(5-phospho-D-ribosyl)imidazole-4-carboxamide from 5-amino-1-(5-phospho-D-ribosyl)imidazole-4-carboxylate: step 1/2. This Corynebacterium urealyticum (strain ATCC 43042 / DSM 7109) protein is Phosphoribosylaminoimidazole-succinocarboxamide synthase.